A 496-amino-acid polypeptide reads, in one-letter code: Glycerol kinase (496 aa).

An ADP-binding site is contributed by T11. Residues T11, S12, and S13 each coordinate ATP. Residue T11 participates in sn-glycerol 3-phosphate binding. R15 serves as a coordination point for ADP. Residues R81, E82, Y133, and D242 each coordinate sn-glycerol 3-phosphate. Residues R81, E82, Y133, D242, and Q243 each coordinate glycerol. T264 and G307 together coordinate ADP. ATP is bound by residues T264, G307, Q311, and G412. ADP is bound by residues G412 and N416.

It belongs to the FGGY kinase family.

It catalyses the reaction glycerol + ATP = sn-glycerol 3-phosphate + ADP + H(+). It functions in the pathway polyol metabolism; glycerol degradation via glycerol kinase pathway; sn-glycerol 3-phosphate from glycerol: step 1/1. Its activity is regulated as follows. Inhibited by fructose 1,6-bisphosphate (FBP). Functionally, key enzyme in the regulation of glycerol uptake and metabolism. Catalyzes the phosphorylation of glycerol to yield sn-glycerol 3-phosphate. This Albidiferax ferrireducens (strain ATCC BAA-621 / DSM 15236 / T118) (Rhodoferax ferrireducens) protein is Glycerol kinase.